The primary structure comprises 458 residues: ATP synthase subunit beta 2 (458 aa).

An ATP-binding site is contributed by 148-155 (GGAGVGKT).

The protein belongs to the ATPase alpha/beta chains family. In terms of assembly, F-type ATPases have 2 components, CF(1) - the catalytic core - and CF(0) - the membrane proton channel. CF(1) has five subunits: alpha(3), beta(3), gamma(1), delta(1), epsilon(1). CF(0) has three main subunits: a(1), b(2) and c(9-12). The alpha and beta chains form an alternating ring which encloses part of the gamma chain. CF(1) is attached to CF(0) by a central stalk formed by the gamma and epsilon chains, while a peripheral stalk is formed by the delta and b chains.

The protein resides in the cell inner membrane. It catalyses the reaction ATP + H2O + 4 H(+)(in) = ADP + phosphate + 5 H(+)(out). Its function is as follows. Produces ATP from ADP in the presence of a proton gradient across the membrane. The catalytic sites are hosted primarily by the beta subunits. The polypeptide is ATP synthase subunit beta 2 (Marinomonas sp. (strain MWYL1)).